We begin with the raw amino-acid sequence, 204 residues long: Leucyl/phenylalanyl-tRNA--protein transferase (204 aa).

The protein belongs to the L/F-transferase family.

It localises to the cytoplasm. It catalyses the reaction N-terminal L-lysyl-[protein] + L-leucyl-tRNA(Leu) = N-terminal L-leucyl-L-lysyl-[protein] + tRNA(Leu) + H(+). The enzyme catalyses N-terminal L-arginyl-[protein] + L-leucyl-tRNA(Leu) = N-terminal L-leucyl-L-arginyl-[protein] + tRNA(Leu) + H(+). It carries out the reaction L-phenylalanyl-tRNA(Phe) + an N-terminal L-alpha-aminoacyl-[protein] = an N-terminal L-phenylalanyl-L-alpha-aminoacyl-[protein] + tRNA(Phe). Functionally, functions in the N-end rule pathway of protein degradation where it conjugates Leu, Phe and, less efficiently, Met from aminoacyl-tRNAs to the N-termini of proteins containing an N-terminal arginine or lysine. In Agrobacterium fabrum (strain C58 / ATCC 33970) (Agrobacterium tumefaciens (strain C58)), this protein is Leucyl/phenylalanyl-tRNA--protein transferase.